Consider the following 57-residue polypeptide: Large ribosomal subunit protein bL32 (57 aa).

The tract at residues 1–22 (MAVPKKKTSKSKRDKRRATWRH) is disordered.

Belongs to the bacterial ribosomal protein bL32 family.

This is Large ribosomal subunit protein bL32 from Nostoc punctiforme (strain ATCC 29133 / PCC 73102).